We begin with the raw amino-acid sequence, 213 residues long: Large ribosomal subunit protein uL3 (213 aa).

This sequence belongs to the universal ribosomal protein uL3 family. In terms of assembly, part of the 50S ribosomal subunit. Forms a cluster with proteins L14 and L19.

In terms of biological role, one of the primary rRNA binding proteins, it binds directly near the 3'-end of the 23S rRNA, where it nucleates assembly of the 50S subunit. The protein is Large ribosomal subunit protein uL3 of Petrotoga mobilis (strain DSM 10674 / SJ95).